We begin with the raw amino-acid sequence, 184 residues long: ATP synthase subunit b, chloroplastic (184 aa).

A helical transmembrane segment spans residues 27–49; that stretch reads LATNPINLSVVLGVLIFFGKGVL.

This sequence belongs to the ATPase B chain family. F-type ATPases have 2 components, F(1) - the catalytic core - and F(0) - the membrane proton channel. F(1) has five subunits: alpha(3), beta(3), gamma(1), delta(1), epsilon(1). F(0) has four main subunits: a(1), b(1), b'(1) and c(10-14). The alpha and beta chains form an alternating ring which encloses part of the gamma chain. F(1) is attached to F(0) by a central stalk formed by the gamma and epsilon chains, while a peripheral stalk is formed by the delta, b and b' chains.

It is found in the plastid. The protein resides in the chloroplast thylakoid membrane. Its function is as follows. F(1)F(0) ATP synthase produces ATP from ADP in the presence of a proton or sodium gradient. F-type ATPases consist of two structural domains, F(1) containing the extramembraneous catalytic core and F(0) containing the membrane proton channel, linked together by a central stalk and a peripheral stalk. During catalysis, ATP synthesis in the catalytic domain of F(1) is coupled via a rotary mechanism of the central stalk subunits to proton translocation. Component of the F(0) channel, it forms part of the peripheral stalk, linking F(1) to F(0). The protein is ATP synthase subunit b, chloroplastic of Piper cenocladum (Ant piper).